Reading from the N-terminus, the 259-residue chain is MGLIPHSIIRTLSRLRTEFMSKSGPLVFYEMEVAKKRASASLRYLTCLLVLPWVISILLQKSIEPWVTFWWNTSSFDILDFLEEENTLVIFGQIEELLLFERMIENYSETYSKPSSKEIKKKTNVIKLYKKDCIHIITHLFTNFIGFALLSTYLVMGQKKLAIFFSWIREFFYSMSDTMKAFSILLATDLCIGFHSPHGWELLIDWISENYGFVHNDRIISSLVSTFPVILDTIFKYWIFRRFNRISPSLVVIYHSMNE.

The next 4 membrane-spanning stretches (helical) occupy residues 47–67, 136–156, 184–204, and 219–239; these read CLLVLPWVISILLQKSIEPWV, IITHLFTNFIGFALLSTYLVM, ILLATDLCIGFHSPHGWELLI, and IISSLVSTFPVILDTIFKYWI.

Belongs to the CemA family.

Its subcellular location is the plastid. It localises to the chloroplast inner membrane. It catalyses the reaction K(+)(in) + H(+)(out) = K(+)(out) + H(+)(in). In terms of biological role, contributes to K(+)/H(+) antiport activity by supporting proton efflux to control proton extrusion and homeostasis in chloroplasts in a light-dependent manner to modulate photosynthesis. Prevents excessive induction of non-photochemical quenching (NPQ) under continuous-light conditions. Indirectly promotes efficient inorganic carbon uptake into chloroplasts. In Welwitschia mirabilis (Tree tumbo), this protein is Potassium/proton antiporter CemA.